The sequence spans 57 residues: MSKTIVRKNESLEDALRRFKRSVSKTGTLAEARKREFYEKPSVKRKKKSEAARKRKF.

The protein belongs to the bacterial ribosomal protein bS21 family.

This Bacillus cytotoxicus (strain DSM 22905 / CIP 110041 / 391-98 / NVH 391-98) protein is Small ribosomal subunit protein bS21.